The chain runs to 255 residues: MNINKIALIYNHNSKHLAIIEEIKKLYNYCKIEEAEVIIVIGGDGELLHNIHRYMHLNIPFYGVNLGSLGFLMNPLDTKKLLQNIHESTVSILNPLLMQVEDTSGQIYTALAINEVSIFRKTNQAAKFRIEVNGIERMSELVADGALVATPAGSSAYNLSASGPILPLESNMLCLTPICSFRPRRWHGALLLASATIKFEILNTNKRPVNATADFQEFNNITNVTVKSTKDKPVKLLFNKNHTLEDRIIKEQFGG.

Asp-44 acts as the Proton acceptor in catalysis. NAD(+) is bound by residues Asp-44–Gly-45, His-49, Asn-114–Glu-115, Asp-144, Ala-152, Ser-155–Ser-160, and Gln-216.

It belongs to the NAD kinase family. A divalent metal cation is required as a cofactor.

The protein localises to the cytoplasm. The enzyme catalyses NAD(+) + ATP = ADP + NADP(+) + H(+). Functionally, involved in the regulation of the intracellular balance of NAD and NADP, and is a key enzyme in the biosynthesis of NADP. Catalyzes specifically the phosphorylation on 2'-hydroxyl of the adenosine moiety of NAD to yield NADP. The polypeptide is NAD kinase (Rickettsia conorii (strain ATCC VR-613 / Malish 7)).